Reading from the N-terminus, the 108-residue chain is Large ribosomal subunit protein bL31B (108 aa).

A disordered region spans residues 81-108; sequence KPAQPVQAPAEEGPVVKGKKKAPAKKKK. A compositionally biased stretch (basic residues) spans 97–108; sequence KGKKKAPAKKKK.

It belongs to the bacterial ribosomal protein bL31 family. Type B subfamily. Part of the 50S ribosomal subunit.

The protein is Large ribosomal subunit protein bL31B of Chlamydia caviae (strain ATCC VR-813 / DSM 19441 / 03DC25 / GPIC) (Chlamydophila caviae).